Consider the following 501-residue polypeptide: Putative antiporter subunit mnhD2 (501 aa).

14 consecutive transmembrane segments (helical) span residues 4 to 24, 33 to 53, 79 to 99, 109 to 129, 131 to 151, 162 to 182, 207 to 227, 245 to 265, 274 to 294, 309 to 329, 334 to 354, 369 to 389, 409 to 429, and 452 to 472; these read SNLL…LVFI, IFSI…LIYV, LSLL…AYGF, YYLP…FLTA, LFNI…LITL, IIYV…VGLL, IVIV…LVLF, FAAL…TLIF, PLLV…VLAY, IGFI…GAIF, DIVV…ITGL, FFGV…PFSG, LALM…IFFV, and NLIG…PLLF.

It belongs to the CPA3 antiporters (TC 2.A.63) subunit D family. In terms of assembly, may form a heterooligomeric complex that consists of seven subunits: mnhA2, mnhB2, mnhC2, mnhD2, mnhE2, mnhF2 and mnhG2.

It localises to the cell membrane. This is Putative antiporter subunit mnhD2 (mnhD2) from Staphylococcus saprophyticus subsp. saprophyticus (strain ATCC 15305 / DSM 20229 / NCIMB 8711 / NCTC 7292 / S-41).